We begin with the raw amino-acid sequence, 1291 residues long: MSSLPGCIGLDAATATVESEEIAELQQAVVEELGISMEELRHFIDEELEKMDCVQQRKKQLAELETWVIQKESEVAHVDQLFDDASRAVTNCESLVKDFYSKLGLQYRDSSSEDESSRPTEIIEIPDEDDDVLSIDSGDAGSRTPKDQKLREAMAALRKSAQDVQKFMDAVNKKSSSQDLHKGTLSQMSGELSKDGDLIVSMRILGKKRTKTWHKGTLIAIQTVGPGKKYKVKFDNKGKSLLSGNHIAYDYHPPADKLYVGSRVVAKYKDGNQVWLYAGIVAETPNVKNKLRFLIFFDDGYASYVTQSELYPICRPLKKTWEDIEDISCRDFIEEYVTAYPNRPMVLLKSGQLIKTEWEGTWWKSRVEEVDGSLVRILFLDDKRCEWIYRGSTRLEPMFSMKTSSASALEKKQGQLRTRPNMGAVRSKGPVVQYTQDLTGTGTQFKPVEPPQPTAPPAPPFPPAPPLSPQAGDSDLESQLAQSRKQVAKKSTSFRPGSVGSGHSSPTSPALSENVSGGKPGINQTYRSPLGSTASAPAPSALPAPPAPPVFHGMLERAPAEPSYRAPMEKLFYLPHVCSYTCLSRVRPMRNEQYRGKNPLLVPLLYDFRRMTARRRVNRKMGFHVIYKTPCGLCLRTMQEIERYLFETGCDFLFLEMFCLDPYVLVDRKFQPYKPFYYILDITYGKEDVPLSCVNEIDTTPPPQVAYSKERIPGKGVFINTGPEFLVGCDCKDGCRDKSKCACHQLTIQATACTPGGQINPNSGYQYKRLEECLPTGVYECNKRCKCDPNMCTNRLVQHGLQVRLQLFKTQNKGWGIRCLDDIAKGSFVCIYAGKILTDDFADKEGLEMGDEYFANLDHIESVENFKEGYESDAPCSSDSSGVDLKDQEDGNSGTEDPEESNDDSSDDNFCKDEDFSTSSVWRSYATRRQTRGQKENGLSETTSKDSHPPDLGPPHIPVPPSIPVGGCNPPSSEETPKNKVASWLSCNSVSEGGFADSDSHSSFKTNEGGEGRAGGSRMEAEKASTSGLGIKDEGDIKQAKKEDTDDRNKMSVVTESSRNYGYNPSPVKPEGLRRPPSKTSMHQSRRLMASAQSNPDDVLTLSSSTESEGESGTSRKPTAGQTSATAVDSDDIQTISSGSEGDDFEDKKNMTGPMKRQVAVKSTRGFALKSTHGIAIKSTNMASVDKGESAPVRKNTRQFYDGEESCYIIDAKLEGNLGRYLNHSCSPNLFVQNVFVDTHDLRFPWVAFFASKRIRAGTELTWDYNYEVGSVEGKELLCCCGAIECRGRLL.

Positions 18–64 (ESEEIAELQQAVVEELGISMEELRHFIDEELEKMDCVQQRKKQLAEL) form a coiled coil. Residues 108–147 (RDSSSEDESSRPTEIIEIPDEDDDVLSIDSGDAGSRTPKD) are disordered. Residues S112 and S117 each carry the phosphoserine modification. T120 is modified (phosphothreonine). The span at 124–133 (EIPDEDDDVL) shows a compositional bias: acidic residues. A Glycyl lysine isopeptide (Lys-Gly) (interchain with G-Cter in SUMO2); alternate cross-link involves residue K182. K182 is covalently cross-linked (Glycyl lysine isopeptide (Lys-Gly) (interchain with G-Cter in ubiquitin); alternate). Tudor domains are found at residues 257-320 (KLYV…LKKT) and 347-403 (LLKS…SMKT). A disordered region spans residues 404-545 (SSASALEKKQ…APAPSALPAP (142 aa)). Positions 433-444 (QYTQDLTGTGTQ) are enriched in polar residues. Over residues 448–468 (VEPPQPTAPPAPPFPPAPPLS) the composition is skewed to pro residues. The span at 477–515 (ESQLAQSRKQVAKKSTSFRPGSVGSGHSSPTSPALSENV) shows a compositional bias: polar residues. The segment covering 528–539 (SPLGSTASAPAP) has biased composition (low complexity). One can recognise an MBD domain in the interval 594 to 665 (YRGKNPLLVP…EMFCLDPYVL (72 aa)). In terms of domain architecture, Pre-SET spans 727 to 800 (VGCDCKDGCR…MCTNRLVQHG (74 aa)). 9 residues coordinate Zn(2+): C729, C731, C735, C741, C743, C781, C785, C787, and C792. Residues 803–1266 (VRLQLFKTQN…AGTELTWDYN (464 aa)) form the SET domain. Residues 813–815 (KGW), D851, and Y853 contribute to the S-adenosyl-L-methionine site. K867 participates in a covalent cross-link: Glycyl lysine isopeptide (Lys-Gly) (interchain with G-Cter in ubiquitin). The interval 868–1160 (EGYESDAPCS…MTGPMKRQVA (293 aa)) is disordered. A compositionally biased stretch (acidic residues) spans 896–907 (EDPEESNDDSSD). Pro residues predominate over residues 951–963 (DLGPPHIPVPPSI). Phosphoserine is present on S1025. Residues 1031–1050 (IKDEGDIKQAKKEDTDDRNK) show a composition bias toward basic and acidic residues. A Glycyl lysine isopeptide (Lys-Gly) (interchain with G-Cter in SUMO2); alternate cross-link involves residue K1032. A Glycyl lysine isopeptide (Lys-Gly) (interchain with G-Cter in SUMO1); alternate cross-link involves residue K1032. Residue K1038 forms a Glycyl lysine isopeptide (Lys-Gly) (interchain with G-Cter in SUMO2) linkage. Positions 1052 to 1063 (SVVTESSRNYGY) are enriched in polar residues. S1066 carries the phosphoserine modification. A Glycyl lysine isopeptide (Lys-Gly) (interchain with G-Cter in SUMO2) cross-link involves residue K1069. Over residues 1100-1115 (LTLSSSTESEGESGTS) the composition is skewed to low complexity. Residues 1116-1140 (RKPTAGQTSATAVDSDDIQTISSGS) are compositionally biased toward polar residues. A Glycyl lysine isopeptide (Lys-Gly) (interchain with G-Cter in SUMO2) cross-link involves residue K1149. 2 positions are modified to N6,N6,N6-trimethyllysine; alternate: K1170 and K1178. 2 positions are modified to N6,N6-dimethyllysine; alternate: K1170 and K1178. S-adenosyl-L-methionine-binding positions include R1220 and 1223–1224 (NH). Residues C1226, C1279, C1281, and C1286 each coordinate Zn(2+). In terms of domain architecture, Post-SET spans 1275–1291 (KELLCCCGAIECRGRLL).

The protein belongs to the class V-like SAM-binding methyltransferase superfamily. Histone-lysine methyltransferase family. Suvar3-9 subfamily. As to quaternary structure, part of a complex containing at least CDYL, REST, WIZ, SETDB1, EHMT1 and EHMT2. Forms a complex with ATRX, TRIM28 and ZNF274. Probably part of a corepressor complex containing ZNF304, TRIM28, SETDB1 and DNMT1. Interacts with TRIM28/TIF1B. Interacts with ATF7IP and ATF7IP2; the interaction with ATF7IP protects SETDB1 from proteasomal degradation and is required to stimulate histone methyltransferase activity and facilitate the conversion of dimethylated to trimethylated H3 'Lys-9'. Interacts with CBX1 and CBX5. Interacts with DNMT3A and DNMT3B. Interacts with SUMO2. Interacts with MPHOSPH8. Interacts with ERG. Interacts with HDAC1, HDAC2, SIN3A and SIN3B. Interacts with ATRX. Interacts with RESF1. Interacts with ZNF638. Interacts with TASOR. Interacts with ZNF263; recruited to the SIX3 promoter along with other proteins involved in chromatin modification and transcriptional corepression where it contributes to transcriptional repression. Interacts with PHF13; the interaction probably enhances SETDB1 chromatin-associated levels and activity. Interacts with VRK1. In terms of processing, degraded by the proteasome, shielded by interaction with ATF7IP. Post-translationally, monoubiquitinated at Lys-867 by E2 enzymes of the UBE2E family. The conjugated-Ub is protected from deubiquitination by the SET domain. Monoubiquitination at Lys-867 is required for catalytic activity, H3K9 methylation and endogenous retrovirus silencing. Widely expressed. High expression in testis.

The protein localises to the nucleus. The protein resides in the cytoplasm. Its subcellular location is the chromosome. The enzyme catalyses N(6),N(6)-dimethyl-L-lysyl(9)-[histone H3] + S-adenosyl-L-methionine = N(6),N(6),N(6)-trimethyl-L-lysyl(9)-[histone H3] + S-adenosyl-L-homocysteine + H(+). Histone methyltransferase that specifically trimethylates 'Lys-9' of histone H3. H3 'Lys-9' trimethylation represents a specific tag for epigenetic transcriptional repression by recruiting HP1 (CBX1, CBX3 and/or CBX5) proteins to methylated histones. Mainly functions in euchromatin regions, thereby playing a central role in the silencing of euchromatic genes. H3 'Lys-9' trimethylation is coordinated with DNA methylation. Required for HUSH-mediated heterochromatin formation and gene silencing. Forms a complex with MBD1 and ATF7IP that represses transcription and couples DNA methylation and histone 'Lys-9' trimethylation. Its activity is dependent on MBD1 and is heritably maintained through DNA replication by being recruited by CAF-1. SETDB1 is targeted to histone H3 by TRIM28/TIF1B, a factor recruited by KRAB zinc-finger proteins. Probably forms a corepressor complex required for activated KRAS-mediated promoter hypermethylation and transcriptional silencing of tumor suppressor genes (TSGs) or other tumor-related genes in colorectal cancer (CRC) cells. Required to maintain a transcriptionally repressive state of genes in undifferentiated embryonic stem cells (ESCs). In ESCs, in collaboration with TRIM28, is also required for H3K9me3 and silencing of endogenous and introduced retroviruses in a DNA-methylation independent-pathway. Associates at promoter regions of tumor suppressor genes (TSGs) leading to their gene silencing. The SETDB1-TRIM28-ZNF274 complex may play a role in recruiting ATRX to the 3'-exons of zinc-finger coding genes with atypical chromatin signatures to establish or maintain/protect H3K9me3 at these transcriptionally active regions. This chain is Histone-lysine N-methyltransferase SETDB1, found in Homo sapiens (Human).